The primary structure comprises 512 residues: Probable metalloreductase AIM14 (512 aa).

The next 7 membrane-spanning stretches (helical) occupy residues 20–40 (IKYGYIVLGFSVVHIIGILIC), 61–81 (PLFISIIAWTLILIGLGVFHV), 97–117 (MSYALLPFDIFLVLRPNSIGL), 132–152 (VIIAGAIIHGVGYFIKWILEG), 161–181 (LWNFLGIVVFMLNLILIIISL), 191–211 (YFYVVHNITVWLFVGLICLHA), and 218–235 (YAIACASLLGLQIFERYA). Positions 94 to 206 (FGRMSYALLP…NITVWLFVGL (113 aa)) constitute a Ferric oxidoreductase domain. The FAD-binding FR-type domain occupies 230–355 (IFERYAKSHS…GGSGISFALP (126 aa)). Residues 427 to 436 (ESLPSSETPS) show a composition bias toward low complexity. The tract at residues 427-451 (ESLPSSETPSRTVNDDSLSQDTRPK) is disordered. Positions 437–447 (RTVNDDSLSQD) are enriched in polar residues.

Belongs to the ferric reductase (FRE) family. AIM14 subfamily.

It is found in the membrane. In terms of biological role, probable cell surface metalloreductase. May be involved in iron or copper homeostasis. The polypeptide is Probable metalloreductase AIM14 (AIM14) (Debaryomyces hansenii (strain ATCC 36239 / CBS 767 / BCRC 21394 / JCM 1990 / NBRC 0083 / IGC 2968) (Yeast)).